The sequence spans 502 residues: MAAPLLMIIKNQTDHRQDPNPNPTHLSSSIQEAKSIAKISLPLILTGLLLYSRSMISMLFLGRLNDLSALSGGSLALGFANITGYSLLSGLSIGMEPICVQAFGAKRFKLLGLALQRTTLLLLLCSLPISILWLNIKKILLFFGQDEEISNQAEIFILFSLPDLILQSFLHPIRIYLRSQSITLPLTYSAFFAVLLHIPINYLLVSSLGLGLKGVALGAIWTNVNLLGFLIIYIVFSGVYQKTWGGFSMDCFKGWRSLMKLAIPSCVSVCLEWWWYEIMILLCGLLLNPQATVASMGILIQTTALIYIFPSSLSISVSTRVGNELGANQPDKARIAARTGLSLSLGLGLLAMFFALMVRNCWARLFTDEEEIVKLTSMVLPIIGLCELGNCPQTTLCGVLRGSARPKLGANINLCCFYFVGMPVAVWLSFFSGFDFKGLWLGLFAAQGSCLISMLVVLARTDWEVEVHRAKELMTRSCDGDEDDGNTPFLLDSLDIEENLVF.

The next 12 helical transmembrane spans lie at 41-61 (LPLILTGLLLYSRSMISMLFL), 75-95 (LALGFANITGYSLLSGLSIGM), 123-143 (LLCSLPISILWLNIKKILLFF), 153-173 (AEIFILFSLPDLILQSFLHPI), 190-210 (AFFAVLLHIPINYLLVSSLGL), 216-236 (ALGAIWTNVNLLGFLIIYIVF), 267-287 (VSVCLEWWWYEIMILLCGLLL), 293-313 (VASMGILIQTTALIYIFPSSL), 338-358 (RTGLSLSLGLGLLAMFFALMV), 372-392 (IVKLTSMVLPIIGLCELGNCP), 414-434 (LCCFYFVGMPVAVWLSFFSGF), and 439-459 (LWLGLFAAQGSCLISMLVVLA).

Belongs to the multi antimicrobial extrusion (MATE) (TC 2.A.66.1) family.

The protein localises to the membrane. The sequence is that of Protein DETOXIFICATION 49 from Arabidopsis thaliana (Mouse-ear cress).